A 369-amino-acid polypeptide reads, in one-letter code: Histidinol-phosphate aminotransferase (369 aa).

N6-(pyridoxal phosphate)lysine is present on K223.

The protein belongs to the class-II pyridoxal-phosphate-dependent aminotransferase family. Histidinol-phosphate aminotransferase subfamily. Homodimer. Pyridoxal 5'-phosphate serves as cofactor.

The enzyme catalyses L-histidinol phosphate + 2-oxoglutarate = 3-(imidazol-4-yl)-2-oxopropyl phosphate + L-glutamate. It participates in amino-acid biosynthesis; L-histidine biosynthesis; L-histidine from 5-phospho-alpha-D-ribose 1-diphosphate: step 7/9. This is Histidinol-phosphate aminotransferase from Shouchella clausii (strain KSM-K16) (Alkalihalobacillus clausii).